Consider the following 522-residue polypeptide: Penicillin-sensitive carboxypeptidase A (522 aa).

S94 acts as the Acyl-ester intermediate in catalysis. The active-site Proton acceptor is the K97. S351 is an active-site residue. K461 contributes to the substrate binding site.

Belongs to the peptidase S13 family.

The catalysed reaction is Preferential cleavage: (Ac)2-L-Lys-D-Ala-|-D-Ala. Also transpeptidation of peptidyl-alanyl moieties that are N-acyl substituents of D-alanine.. With respect to regulation, inhibited by penicillin G. In terms of biological role, carboxypeptidase. This Dictyostelium discoideum (Social amoeba) protein is Penicillin-sensitive carboxypeptidase A (pscA).